A 757-amino-acid polypeptide reads, in one-letter code: Dynamin-related protein DNM1 (757 aa).

The region spanning 25–333 (TLDLPILAVV…LLSHIRDKLP (309 aa)) is the Dynamin-type G domain. The G1 motif stretch occupies residues 35–42 (GSQSSGKS). 35 to 42 (GSQSSGKS) is a GTP binding site. The G2 motif stretch occupies residues 61–63 (VTR). Residues 175 to 178 (DLPG) are G3 motif. GTP contacts are provided by residues 175–179 (DLPGI) and 244–247 (TKLD). Positions 244–247 (TKLD) are G4 motif. Residues 274–277 (VNRS) are G5 motif. A disordered region spans residues 557 to 597 (SKLSQQENGQTNGINGTSSISSNIDQDSAKNSDYDDDGIDA). The span at 567 to 580 (TNGINGTSSISSNI) shows a compositional bias: low complexity. A Phosphoserine modification is found at Ser-629. Residues 670–757 (CELIKRLIVS…KAATLISNIL (88 aa)) enclose the GED domain.

It belongs to the TRAFAC class dynamin-like GTPase superfamily. Dynamin/Fzo/YdjA family. As to quaternary structure, interacts with FIS1 and MDV1.

The protein resides in the mitochondrion outer membrane. The catalysed reaction is GTP + H2O = GDP + phosphate + H(+). In terms of biological role, microtubule-associated force-producing protein that participates mitochondrial fission. Fission of mitochondria occurs in many cell types and constitutes an important step in mitochondria morphology, which is balanced between fusion and fission. Functions antagonistically with FZO1. In Saccharomyces cerevisiae (strain ATCC 204508 / S288c) (Baker's yeast), this protein is Dynamin-related protein DNM1 (DNM1).